We begin with the raw amino-acid sequence, 61 residues long: Small ribosomal subunit protein uS14 (61 aa).

The Zn(2+) site is built by Cys24, Cys27, Cys40, and Cys43.

This sequence belongs to the universal ribosomal protein uS14 family. Zinc-binding uS14 subfamily. In terms of assembly, part of the 30S ribosomal subunit. Contacts proteins S3 and S10. It depends on Zn(2+) as a cofactor.

Binds 16S rRNA, required for the assembly of 30S particles and may also be responsible for determining the conformation of the 16S rRNA at the A site. This Acidothermus cellulolyticus (strain ATCC 43068 / DSM 8971 / 11B) protein is Small ribosomal subunit protein uS14.